We begin with the raw amino-acid sequence, 298 residues long: uncharacterized protein (298 aa).

The region spanning 194-295 (KRLNTALIAI…QLSPSQYRKS (102 aa)) is the HTH araC/xylS-type domain. 2 DNA-binding regions (H-T-H motif) span residues 214 to 235 (EQLA…QQHI) and 262 to 285 (VLAI…KNYY).

This is an uncharacterized protein from Haemophilus influenzae (strain ATCC 51907 / DSM 11121 / KW20 / Rd).